The following is a 313-amino-acid chain: tRNA-cytidine(32) 2-sulfurtransferase (313 aa).

The PP-loop motif signature appears at 47–52 (SGGKDS). 3 residues coordinate [4Fe-4S] cluster: C122, C125, and C213.

The protein belongs to the TtcA family. Homodimer. Mg(2+) is required as a cofactor. The cofactor is [4Fe-4S] cluster.

The protein resides in the cytoplasm. It carries out the reaction cytidine(32) in tRNA + S-sulfanyl-L-cysteinyl-[cysteine desulfurase] + AH2 + ATP = 2-thiocytidine(32) in tRNA + L-cysteinyl-[cysteine desulfurase] + A + AMP + diphosphate + H(+). It functions in the pathway tRNA modification. Catalyzes the ATP-dependent 2-thiolation of cytidine in position 32 of tRNA, to form 2-thiocytidine (s(2)C32). The sulfur atoms are provided by the cysteine/cysteine desulfurase (IscS) system. In Yersinia pseudotuberculosis serotype IB (strain PB1/+), this protein is tRNA-cytidine(32) 2-sulfurtransferase.